The following is a 282-amino-acid chain: Acetyl-coenzyme A carboxylase carboxyl transferase subunit beta (282 aa).

Residues 29 to 282 form the CoA carboxyltransferase N-terminal domain; that stretch reads LMKRCPNCGL…LLKYGGMQDD (254 aa). 4 residues coordinate Zn(2+): Cys-33, Cys-36, Cys-51, and Cys-54. A C4-type zinc finger spans residues 33-54; the sequence is CPNCGLEFFARRLDKYKTCPDC.

Belongs to the AccD/PCCB family. As to quaternary structure, acetyl-CoA carboxylase is a heterohexamer composed of biotin carboxyl carrier protein (AccB), biotin carboxylase (AccC) and two subunits each of ACCase subunit alpha (AccA) and ACCase subunit beta (AccD). Requires Zn(2+) as cofactor.

The protein resides in the cytoplasm. The enzyme catalyses N(6)-carboxybiotinyl-L-lysyl-[protein] + acetyl-CoA = N(6)-biotinyl-L-lysyl-[protein] + malonyl-CoA. It participates in lipid metabolism; malonyl-CoA biosynthesis; malonyl-CoA from acetyl-CoA: step 1/1. In terms of biological role, component of the acetyl coenzyme A carboxylase (ACC) complex. Biotin carboxylase (BC) catalyzes the carboxylation of biotin on its carrier protein (BCCP) and then the CO(2) group is transferred by the transcarboxylase to acetyl-CoA to form malonyl-CoA. The polypeptide is Acetyl-coenzyme A carboxylase carboxyl transferase subunit beta (Lactobacillus delbrueckii subsp. bulgaricus (strain ATCC 11842 / DSM 20081 / BCRC 10696 / JCM 1002 / NBRC 13953 / NCIMB 11778 / NCTC 12712 / WDCM 00102 / Lb 14)).